The sequence spans 340 residues: Dihydroorotate dehydrogenase (quinone) (340 aa).

Residues 61–65 (AGLDK) and Thr-85 each bind FMN. Lys-65 contributes to the substrate binding site. Residue 110-114 (NRMGF) coordinates substrate. FMN is bound by residues Asn-138 and Asn-171. Residue Asn-171 participates in substrate binding. Ser-174 serves as the catalytic Nucleophile. A substrate-binding site is contributed by Asn-176. Residues Lys-216 and Thr-244 each contribute to the FMN site. Residue 245-246 (NT) coordinates substrate. Residues Gly-267, Gly-296, and 317-318 (YS) contribute to the FMN site.

Belongs to the dihydroorotate dehydrogenase family. Type 2 subfamily. Monomer. It depends on FMN as a cofactor.

It is found in the cell membrane. It catalyses the reaction (S)-dihydroorotate + a quinone = orotate + a quinol. The protein operates within pyrimidine metabolism; UMP biosynthesis via de novo pathway; orotate from (S)-dihydroorotate (quinone route): step 1/1. Its function is as follows. Catalyzes the conversion of dihydroorotate to orotate with quinone as electron acceptor. This Pseudomonas putida (strain ATCC 47054 / DSM 6125 / CFBP 8728 / NCIMB 11950 / KT2440) protein is Dihydroorotate dehydrogenase (quinone).